A 270-amino-acid polypeptide reads, in one-letter code: Formamidopyrimidine-DNA glycosylase (270 aa).

Catalysis depends on P2, which acts as the Schiff-base intermediate with DNA. E3 serves as the catalytic Proton donor. The active-site Proton donor; for beta-elimination activity is K58. H91, R110, and K151 together coordinate DNA. Residues 236–270 form an FPG-type zinc finger; it reads LVYGKAGAPCTECNTPLKEIRMNNRSTVYCPRCQR. The active-site Proton donor; for delta-elimination activity is R260.

It belongs to the FPG family. Monomer. The cofactor is Zn(2+).

It carries out the reaction Hydrolysis of DNA containing ring-opened 7-methylguanine residues, releasing 2,6-diamino-4-hydroxy-5-(N-methyl)formamidopyrimidine.. The enzyme catalyses 2'-deoxyribonucleotide-(2'-deoxyribose 5'-phosphate)-2'-deoxyribonucleotide-DNA = a 3'-end 2'-deoxyribonucleotide-(2,3-dehydro-2,3-deoxyribose 5'-phosphate)-DNA + a 5'-end 5'-phospho-2'-deoxyribonucleoside-DNA + H(+). In terms of biological role, involved in base excision repair of DNA damaged by oxidation or by mutagenic agents. Acts as a DNA glycosylase that recognizes and removes damaged bases. Has a preference for oxidized purines, such as 7,8-dihydro-8-oxoguanine (8-oxoG). Has AP (apurinic/apyrimidinic) lyase activity and introduces nicks in the DNA strand. Cleaves the DNA backbone by beta-delta elimination to generate a single-strand break at the site of the removed base with both 3'- and 5'-phosphates. This is Formamidopyrimidine-DNA glycosylase from Marinobacter nauticus (strain ATCC 700491 / DSM 11845 / VT8) (Marinobacter aquaeolei).